Here is a 509-residue protein sequence, read N- to C-terminus: Maturase K (509 aa).

Belongs to the intron maturase 2 family. MatK subfamily.

It localises to the plastid. The protein resides in the chloroplast. Its function is as follows. Usually encoded in the trnK tRNA gene intron. Probably assists in splicing its own and other chloroplast group II introns. This is Maturase K from Avicennia marina (Grey mangrove).